We begin with the raw amino-acid sequence, 118 residues long: Putative membrane protein insertion efficiency factor (118 aa).

Belongs to the UPF0161 family.

The protein localises to the cell inner membrane. Its function is as follows. Could be involved in insertion of integral membrane proteins into the membrane. This Helicobacter pylori (strain HPAG1) protein is Putative membrane protein insertion efficiency factor.